Reading from the N-terminus, the 529-residue chain is Inosine-5'-monophosphate dehydrogenase (529 aa).

CBS domains are found at residues 129-185 and 189-246; these read MVTD…SKQV and MTKA…PLAT. Residues D283 and 334 to 336 contribute to the NAD(+) site; that span reads GVG. 2 residues coordinate K(+): G336 and G338. S339 contributes to the IMP binding site. Position 341 (C341) interacts with K(+). C341 acts as the Thioimidate intermediate in catalysis. IMP-binding positions include 374–376, 397–398, and 421–425; these read DGG, GS, and YRGMG. R443 (proton acceptor) is an active-site residue. E458 is an IMP binding site. E511, S512, and H513 together coordinate K(+).

Belongs to the IMPDH/GMPR family. Homotetramer. K(+) is required as a cofactor.

It carries out the reaction IMP + NAD(+) + H2O = XMP + NADH + H(+). Its pathway is purine metabolism; XMP biosynthesis via de novo pathway; XMP from IMP: step 1/1. With respect to regulation, mycophenolic acid (MPA) is a non-competitive inhibitor that prevents formation of the closed enzyme conformation by binding to the same site as the amobile flap. In contrast, mizoribine monophosphate (MZP) is a competitive inhibitor that induces the closed conformation. MPA is a potent inhibitor of mammalian IMPDHs but a poor inhibitor of the bacterial enzymes. MZP is a more potent inhibitor of bacterial IMPDH. Catalyzes the conversion of inosine 5'-phosphate (IMP) to xanthosine 5'-phosphate (XMP), the first committed and rate-limiting step in the de novo synthesis of guanine nucleotides, and therefore plays an important role in the regulation of cell growth. This Mycobacterium bovis (strain ATCC BAA-935 / AF2122/97) protein is Inosine-5'-monophosphate dehydrogenase.